The following is a 100-amino-acid chain: MNDAHFNIISKDKNSITVEMINYDNTLLRPLVEEISRDDSVDEIHYYIKHPNLDNPQIHVKVKSGKPQSAIKKSIRRIDRIYNSLIDDLEREEKRLNVSK.

This sequence belongs to the archaeal Rpo11/eukaryotic RPB11/RPC19 RNA polymerase subunit family. As to quaternary structure, part of the RNA polymerase complex.

It localises to the cytoplasm. The enzyme catalyses RNA(n) + a ribonucleoside 5'-triphosphate = RNA(n+1) + diphosphate. In terms of biological role, DNA-dependent RNA polymerase (RNAP) catalyzes the transcription of DNA into RNA using the four ribonucleoside triphosphates as substrates. The protein is DNA-directed RNA polymerase subunit Rpo11 of Picrophilus torridus (strain ATCC 700027 / DSM 9790 / JCM 10055 / NBRC 100828 / KAW 2/3).